The primary structure comprises 340 residues: Glycerol-3-phosphate dehydrogenase [NAD(P)+] (340 aa).

NADPH is bound by residues serine 13, tyrosine 14, and lysine 108. Positions 108, 137, and 139 each coordinate sn-glycerol 3-phosphate. Alanine 141 serves as a coordination point for NADPH. Residues lysine 193, aspartate 246, serine 256, arginine 257, and asparagine 258 each coordinate sn-glycerol 3-phosphate. The Proton acceptor role is filled by lysine 193. NADPH is bound at residue arginine 257. The NADPH site is built by isoleucine 281 and glutamate 283.

It belongs to the NAD-dependent glycerol-3-phosphate dehydrogenase family.

The protein resides in the cytoplasm. It catalyses the reaction sn-glycerol 3-phosphate + NAD(+) = dihydroxyacetone phosphate + NADH + H(+). It carries out the reaction sn-glycerol 3-phosphate + NADP(+) = dihydroxyacetone phosphate + NADPH + H(+). It participates in membrane lipid metabolism; glycerophospholipid metabolism. Functionally, catalyzes the reduction of the glycolytic intermediate dihydroxyacetone phosphate (DHAP) to sn-glycerol 3-phosphate (G3P), the key precursor for phospholipid synthesis. This is Glycerol-3-phosphate dehydrogenase [NAD(P)+] from Bartonella henselae (strain ATCC 49882 / DSM 28221 / CCUG 30454 / Houston 1) (Rochalimaea henselae).